The sequence spans 193 residues: dCTP deaminase (193 aa).

Residues 110 to 115 (RSSLAR), Asp128, 136 to 138 (VLE), Tyr171, Lys178, and Gln182 contribute to the dCTP site. Glu138 serves as the catalytic Proton donor/acceptor. The segment at 169–193 (RPYNRREDAKYRNQQGAVASRIDKD) is disordered.

It belongs to the dCTP deaminase family. Homotrimer.

The catalysed reaction is dCTP + H2O + H(+) = dUTP + NH4(+). The protein operates within pyrimidine metabolism; dUMP biosynthesis; dUMP from dCTP (dUTP route): step 1/2. In terms of biological role, catalyzes the deamination of dCTP to dUTP. In Escherichia coli O1:K1 / APEC, this protein is dCTP deaminase.